The following is a 125-amino-acid chain: uncharacterized protein (125 aa).

Positions Met-1–Thr-63 constitute an HTH dtxR-type domain.

The protein belongs to the DtxR/MntR family.

This is an uncharacterized protein from Methanocaldococcus jannaschii (strain ATCC 43067 / DSM 2661 / JAL-1 / JCM 10045 / NBRC 100440) (Methanococcus jannaschii).